We begin with the raw amino-acid sequence, 455 residues long: Membrane-bound lytic murein transglycosylase F (455 aa).

An N-terminal signal peptide occupies residues 1-21; the sequence is MPKSAVSLFAILLLAASVITA. Residues 22–264 are non-LT domain; sequence CSPQTRPDAM…HIKEQHFGHV (243 aa). An LT domain region spans residues 265–455; it reads KQFNYVTTSL…LKYLDEQGRL (191 aa). The active site involves Glu309.

It in the N-terminal section; belongs to the bacterial solute-binding protein 3 family. In the C-terminal section; belongs to the transglycosylase Slt family.

The protein localises to the cell outer membrane. It catalyses the reaction Exolytic cleavage of the (1-&gt;4)-beta-glycosidic linkage between N-acetylmuramic acid (MurNAc) and N-acetylglucosamine (GlcNAc) residues in peptidoglycan, from either the reducing or the non-reducing ends of the peptidoglycan chains, with concomitant formation of a 1,6-anhydrobond in the MurNAc residue.. Functionally, murein-degrading enzyme that degrades murein glycan strands and insoluble, high-molecular weight murein sacculi, with the concomitant formation of a 1,6-anhydromuramoyl product. Lytic transglycosylases (LTs) play an integral role in the metabolism of the peptidoglycan (PG) sacculus. Their lytic action creates space within the PG sacculus to allow for its expansion as well as for the insertion of various structures such as secretion systems and flagella. This Idiomarina loihiensis (strain ATCC BAA-735 / DSM 15497 / L2-TR) protein is Membrane-bound lytic murein transglycosylase F.